The primary structure comprises 348 residues: Dihydroorotase (348 aa).

Positions 17 and 19 each coordinate Zn(2+). Substrate is bound by residues 19 to 21 (HLR) and Asn-45. Residues Lys-103, His-140, and His-178 each coordinate Zn(2+). Lys-103 is subject to N6-carboxylysine. His-140 provides a ligand contact to substrate. A substrate-binding site is contributed by Leu-223. Asp-251 is a binding site for Zn(2+). Asp-251 is an active-site residue. Substrate is bound by residues His-255 and Ala-267.

This sequence belongs to the metallo-dependent hydrolases superfamily. DHOase family. Class II DHOase subfamily. In terms of assembly, homodimer. It depends on Zn(2+) as a cofactor.

It carries out the reaction (S)-dihydroorotate + H2O = N-carbamoyl-L-aspartate + H(+). Its pathway is pyrimidine metabolism; UMP biosynthesis via de novo pathway; (S)-dihydroorotate from bicarbonate: step 3/3. In terms of biological role, catalyzes the reversible cyclization of carbamoyl aspartate to dihydroorotate. This chain is Dihydroorotase, found in Escherichia coli O7:K1 (strain IAI39 / ExPEC).